The chain runs to 825 residues: NT-3 growth factor receptor (825 aa).

A signal peptide spans Met-1–Ala-31. 2 disulfides stabilise this stretch: Cys-32–Cys-38 and Cys-36–Cys-45. The Extracellular segment spans residues Cys-32–Thr-429. 3 N-linked (GlcNAc...) asparagine glycosylation sites follow: Asn-68, Asn-72, and Asn-79. 2 LRR repeats span residues Gly-104–Lys-125 and His-128–Thr-149. Residues Asn-133 and Asn-163 are each glycosylated (N-linked (GlcNAc...) asparagine). In terms of domain architecture, LRRCT spans Asn-160–Leu-209. 2 disulfide bridges follow: Cys-164/Cys-189 and Cys-166/Cys-207. Residues Asn-203, Asn-218, Asn-232, Asn-259, Asn-267, Asn-272, and Asn-294 are each glycosylated (N-linked (GlcNAc...) asparagine). Ig-like C2-type domains are found at residues Pro-210 to Thr-300 and Ser-309 to Glu-382. The cysteines at positions 231 and 284 are disulfide-linked. Residues Cys-320 and Cys-362 are joined by a disulfide bond. Asn-375 and Asn-388 each carry an N-linked (GlcNAc...) asparagine glycan. The chain crosses the membrane as a helical span at residues Phe-430–Ile-453. The Cytoplasmic portion of the chain corresponds to Asn-454–Gly-825. Tyr-516 is modified (phosphotyrosine; by autocatalysis). The region spanning Ile-538–Gly-814 is the Protein kinase domain. ATP is bound by residues Leu-544 to Val-552 and Lys-572. Asp-679 functions as the Proton acceptor in the catalytic mechanism. Tyr-705, Tyr-709, Tyr-710, and Tyr-820 each carry phosphotyrosine; by autocatalysis.

It belongs to the protein kinase superfamily. Tyr protein kinase family. Insulin receptor subfamily. Exists in a dynamic equilibrium between monomeric (low affinity) and dimeric (high affinity) structures. Binds SH2B2. Interacts with SQSTM1 and KIDINS220. Interacts with PTPRS. Interacts with MAPK8IP3/JIP3. Post-translationally, ligand-mediated auto-phosphorylation. In terms of tissue distribution, preferentially in the brain, low levels in the ovaries.

Its subcellular location is the membrane. The enzyme catalyses L-tyrosyl-[protein] + ATP = O-phospho-L-tyrosyl-[protein] + ADP + H(+). Receptor tyrosine kinase involved in nervous system and probably heart development. Upon binding of its ligand NTF3/neurotrophin-3, NTRK3 autophosphorylates and activates different signaling pathways, including the phosphatidylinositol 3-kinase/AKT and the MAPK pathways, that control cell survival and differentiation. The protein is NT-3 growth factor receptor (NTRK3) of Sus scrofa (Pig).